The following is a 463-amino-acid chain: Asparagine--tRNA ligase (463 aa).

Belongs to the class-II aminoacyl-tRNA synthetase family. As to quaternary structure, homodimer.

It is found in the cytoplasm. It catalyses the reaction tRNA(Asn) + L-asparagine + ATP = L-asparaginyl-tRNA(Asn) + AMP + diphosphate + H(+). The polypeptide is Asparagine--tRNA ligase (Nostoc sp. (strain PCC 7120 / SAG 25.82 / UTEX 2576)).